The following is a 42-amino-acid chain: Photosystem I reaction center subunit IX (42 aa).

The chain crosses the membrane as a helical span at residues 7–27; that stretch reads YLSVAPVLSTLWFGALAGLLI.

It belongs to the PsaJ family.

The protein resides in the plastid. It localises to the chloroplast thylakoid membrane. May help in the organization of the PsaE and PsaF subunits. The polypeptide is Photosystem I reaction center subunit IX (Agrostis stolonifera (Creeping bentgrass)).